Reading from the N-terminus, the 325-residue chain is MACGEFSLIARYFDRVRSSRLDVELGIGDDCALLNIPEKQTLAISTDTLVAGNHFLPDIDPADLAYKALAVNLSDLAAMGADPAWLTLALTLPDVDEAWLESFSDSLFDLLNYYDMQLIGGDTTRGPLSMTLGIHGFVPMGRALTRSGAKPGDWIYVTGTPGDSAAGLAILQNRLQVADAKDADYLIKRHLRPSPRILQGQALRDLANSAIDLSDGLISDLGHIVKASDCGARIDLALLPFSDALSRHVEPEQALRWALSGGEDYELCFTVPELNRGALDVALGHLGVPFTCIGQMTADIEGLCFIRDGEPVTLDWKGYDHFATP.

4 residues coordinate Mg(2+): Asp30, Ser45, Thr46, and Asp47. His54 is a substrate binding site. 2 residues coordinate Mg(2+): Asp75 and Asp122. Residues 121 to 122 and Arg146 each bind ATP; that span reads GD. Asp212 contributes to the Mg(2+) binding site. Position 214 (Ser214) interacts with ATP. Asp215 is a Mg(2+) binding site. 2 residues coordinate substrate: Glu263 and Tyr319.

Belongs to the thiamine-monophosphate kinase family.

It carries out the reaction thiamine phosphate + ATP = thiamine diphosphate + ADP. It participates in cofactor biosynthesis; thiamine diphosphate biosynthesis; thiamine diphosphate from thiamine phosphate: step 1/1. With respect to regulation, is markedly activated by the monovalent cations K(+), NH(4)(+), and Rb(+). Is significantly inhibited by ADP, AMP, p-chloromercuribenzoate, N-ethylmaleimide, pyrophosphate, and EDTA. Functionally, catalyzes the ATP-dependent phosphorylation of thiamine-monophosphate (TMP) to form thiamine-pyrophosphate (TPP), the active form of vitamin B1. Cannot use thiamine as substrate. Is highly specific for ATP as phosphate donor. The sequence is that of Thiamine-monophosphate kinase (thiL) from Escherichia coli (strain K12).